The chain runs to 243 residues: UMP-CMP kinase 2 (243 aa).

69 to 74 (GSGKGT) is an ATP binding site. Residues 89-118 (SAGDLLRSEISTGREKGELILNIIKEGKIV) are NMP. A ribonucleoside 5'-phosphate contacts are provided by residues R95, 116-118 (KIV), and 143-146 (GFPR). N150 is a CMP binding site. Positions 181–189 (GRNQGRVDD) are LID. An ATP-binding site is contributed by R182. Positions 186 and 197 each coordinate a ribonucleoside 5'-phosphate.

This sequence belongs to the adenylate kinase family. UMP-CMP kinase subfamily. In terms of assembly, monomer. Mg(2+) serves as cofactor.

The protein localises to the cytoplasm. It localises to the nucleus. The catalysed reaction is UMP + ATP = UDP + ADP. It catalyses the reaction CMP + ATP = CDP + ADP. The enzyme catalyses dCMP + ATP = dCDP + ADP. Functionally, catalyzes the phosphorylation of pyrimidine nucleoside monophosphates at the expense of ATP. Plays an important role in de novo pyrimidine nucleotide biosynthesis. Has preference for UMP and CMP as phosphate acceptors. The protein is UMP-CMP kinase 2 of Oryza sativa subsp. japonica (Rice).